Here is a 705-residue protein sequence, read N- to C-terminus: Translation initiation factor IF-2 (705 aa).

Residues 40–124 (DDQIKALDKK…QPAAPKEIPS (85 aa)) are disordered. Over residues 41–58 (DQIKALDKKFKKEQKNDN) the composition is skewed to basic and acidic residues. Residues 59-77 (KQSTQNNHQKSNNQNQNKG) are compositionally biased toward low complexity. The segment covering 94–108 (KGNKKNNRNNKKNNK) has biased composition (basic residues). The 170-residue stretch at 207 to 376 (ERPAVVTIMG…GLVAEVQELK (170 aa)) folds into the tr-type G domain. Residues 216–223 (GHVDHGKT) form a G1 region. 216-223 (GHVDHGKT) serves as a coordination point for GTP. Positions 241–245 (GITQH) are G2. The G3 stretch occupies residues 262 to 265 (DTPG). Residues 262-266 (DTPGH) and 316-319 (NKID) each bind GTP. The G4 stretch occupies residues 316–319 (NKID). Residues 352-354 (SAL) form a G5 region.

Belongs to the TRAFAC class translation factor GTPase superfamily. Classic translation factor GTPase family. IF-2 subfamily.

The protein resides in the cytoplasm. Functionally, one of the essential components for the initiation of protein synthesis. Protects formylmethionyl-tRNA from spontaneous hydrolysis and promotes its binding to the 30S ribosomal subunits. Also involved in the hydrolysis of GTP during the formation of the 70S ribosomal complex. The chain is Translation initiation factor IF-2 from Staphylococcus aureus (strain USA300).